The following is a 780-amino-acid chain: Acetyl-CoA decarbonylase/synthase complex subunit alpha (780 aa).

[4Fe-4S] cluster contacts are provided by Cys-73, Cys-76, Cys-77, Cys-79, Cys-84, and Cys-93. His-116 is a binding site for CO. [Ni-4Fe-4S] cluster is bound by residues His-250, Cys-278, and Cys-317. 2 consecutive 4Fe-4S ferredoxin-type domains span residues 399-429 and 440-469; these read IDEI…MDAV and LEEM…VSMV. Residues Cys-409, Cys-412, Cys-415, Cys-419, Cys-449, Cys-452, Cys-455, and Cys-459 each coordinate [4Fe-4S] cluster. Positions 517, 546, and 581 each coordinate [Ni-4Fe-4S] cluster.

The protein belongs to the Ni-containing carbon monoxide dehydrogenase family. As to quaternary structure, heterotetramer of two alpha and two epsilon subunits. The ACDS complex is made up of alpha, epsilon, beta, gamma and delta subunits with a probable stoichiometry of (alpha(2)epsilon(2))(4)-beta(8)-(gamma(1)delta(1))(8). The cofactor is [4Fe-4S] cluster. It depends on [Ni-4Fe-4S] cluster as a cofactor.

It catalyses the reaction CO + 2 oxidized [2Fe-2S]-[ferredoxin] + H2O = 2 reduced [2Fe-2S]-[ferredoxin] + CO2 + 2 H(+). Part of the ACDS complex that catalyzes the reversible cleavage of acetyl-CoA, allowing autotrophic growth from CO(2). The alpha-epsilon subcomponent functions as a carbon monoxide dehydrogenase. This Methanothermobacter thermautotrophicus (strain ATCC 29096 / DSM 1053 / JCM 10044 / NBRC 100330 / Delta H) (Methanobacterium thermoautotrophicum) protein is Acetyl-CoA decarbonylase/synthase complex subunit alpha.